The following is a 213-amino-acid chain: MRLRRKAWARPELESDPKVIYNPMQYKENWQEAFGNNHPIHLELGCGRGQFINQCAELNPHINYIAIDLYDEVLVKALRKINEKALHNVRVIPMNIAKLESIFKHDQIEKIYINFCNPWPSRRHHHKRLTHPQFLSVYKKLMKDHSEIWFKTDDDELFKDSLRYFAEEGFIEKYRTFDLHQSEFTENIKTEYEEKFSNQGVKIKFGIFEVNKG.

S-adenosyl-L-methionine is bound by residues E43, D68, N95, and N117. Residues D153 and 190 to 193 each bind substrate; that span reads TEYE.

The protein belongs to the class I-like SAM-binding methyltransferase superfamily. TrmB family.

The enzyme catalyses guanosine(46) in tRNA + S-adenosyl-L-methionine = N(7)-methylguanosine(46) in tRNA + S-adenosyl-L-homocysteine. It participates in tRNA modification; N(7)-methylguanine-tRNA biosynthesis. Catalyzes the formation of N(7)-methylguanine at position 46 (m7G46) in tRNA. In Desulfitobacterium hafniense (strain DSM 10664 / DCB-2), this protein is tRNA (guanine-N(7)-)-methyltransferase.